A 398-amino-acid polypeptide reads, in one-letter code: MAACYNAYSAGSQSFEFDEDDDDASFDSGYEKSFETEAQLSSRRRLDFGTPPTPAIPQPYSGGTWDAVPLSSPPAGFVGLLDTSSNHSTRSGRTLVEHLNSRATNGVFDPPLTSTPVKSPEDPNAPRPKRKYAVGKNRVTRSRSPTQVVKIKRFRRMKANDRERNRMHNLNDALEKLRVTLPSLPEETKLTKIEILRFAHNYIFALEQVLESGGSINLDLEKLQNFTLSGERITKELFDALFVNPQPYPLFGRMFPYGQGMAPLAQHQTAPASHAEQPPAMGGFQHGMDYPQQPPGFDFTGSMRFYHQQQQQPHQPHHLQPNPQQESSPQQFSQEKYDLFRGSFDAAANLHSTNLDSGIHQQSSFYSQTPPWKDYPEDQAHVHPVPHQHSYKNFAPQV.

Disordered regions lie at residues 35 to 59 and 102 to 144; these read ETEA…IPQP and RATN…RSRS. A compositionally biased stretch (basic residues) spans 127–141; the sequence is RPKRKYAVGKNRVTR. The region spanning 154–206 is the bHLH domain; that stretch reads FRRMKANDRERNRMHNLNDALEKLRVTLPSLPEETKLTKIEILRFAHNYIFAL. Disordered regions lie at residues 265–333 and 361–398; these read AQHQ…QQFS and QQSS…APQV. Low complexity predominate over residues 307–333; it reads HQQQQQPHQPHHLQPNPQQESSPQQFS. Residues 361 to 370 are compositionally biased toward polar residues; sequence QQSSFYSQTP.

As to expression, expressed in neuronal and glial precursors during differentiation. In the peripheral nervous system, expression is exclusively in one of the neurons that innervate each larval chemosensory organ. Expressed at a late stage in the development of one type of adult chemosensory organ, the gustatory bristles of the leg, wing and proboscis. Expressed very early in the development of a second type of chemosensory receptors, the olfactory organs of the antenna.

It localises to the nucleus. In terms of biological role, may play a role in the specification of the sugar-sensitive adult gustatory neuron and affect the response to sugar and salt. Regulated by POXN. This chain is Basic helix-loop-helix neural transcription factor TAP (tap), found in Drosophila melanogaster (Fruit fly).